Here is a 106-residue protein sequence, read N- to C-terminus: Urease subunit beta (106 aa).

It belongs to the urease beta subunit family. Heterotrimer of UreA (gamma), UreB (beta) and UreC (alpha) subunits. Three heterotrimers associate to form the active enzyme.

The protein localises to the cytoplasm. It carries out the reaction urea + 2 H2O + H(+) = hydrogencarbonate + 2 NH4(+). Its pathway is nitrogen metabolism; urea degradation; CO(2) and NH(3) from urea (urease route): step 1/1. This Prochlorococcus marinus (strain AS9601) protein is Urease subunit beta.